The chain runs to 398 residues: Probable beta-1,3-galactosyltransferase 5 (398 aa).

The chain crosses the membrane as a helical; Signal-anchor for type II membrane protein span at residues 11 to 31; sequence LTMTWVPLLCISCFFLGAIFT. Asn110, Asn115, and Asn206 each carry an N-linked (GlcNAc...) asparagine glycan.

It belongs to the glycosyltransferase 31 family. Mn(2+) is required as a cofactor.

The protein resides in the golgi apparatus membrane. It participates in protein modification; protein glycosylation. Functionally, beta-1,3-galactosyltransferase that transfers galactose from UDP-galactose to substrates with a terminal glycosyl residue. The polypeptide is Probable beta-1,3-galactosyltransferase 5 (B3GALT5) (Arabidopsis thaliana (Mouse-ear cress)).